Here is a 490-residue protein sequence, read N- to C-terminus: MINKENSVGITIYNTLGRKKEPFVPMIPGKVGMYVCGVTVYDYSHIGHARVMVVFDVIARHLRVTGFDLTYVRNFTDIDDKIIKRANERGESIQTLTQRYIDAFHQDMAALGVQPADIEPKATEHLPEMMQMIGTLMDKGVAYASGGDVYYAVERFANYGQLSGKVLDEQEAGARVEVDSNKQNPMDFVLWKGAKPEEPQWDSPWGAGRPGWHIECSAMGTKYLGASFDIHGGGRDLIFPHHENEIAQTEGCTGQHAVNYWIHNGFVNVVNEEGESEKMSKSLGNFHTIRDLLALYPGEVLRFFILNSHYRSPLDFSFSLLEAAKAGLDRIYTALRSAQALLGKLPGTPIGEPADVPAGAPQDLVENYLKAMDDDFNTPQAIAFLFEAAKMLNTAISEQKDPAVIATWARLIRGLGHHLGLAGQDPELWFRSGIGAEQGLQAEAIEALIAERSAARAAKNWAESDRIRDTLAQQGIVLEDGQHGTQWSRK.

Cys-36 contacts Zn(2+). Residues 38–48 carry the 'HIGH' region motif; it reads VTVYDYSHIGH. The Zn(2+) site is built by Cys-216, His-241, and Glu-245. The short motif at 278 to 282 is the 'KMSKS' region element; sequence KMSKS. Lys-281 is an ATP binding site.

It belongs to the class-I aminoacyl-tRNA synthetase family. Monomer. Zn(2+) is required as a cofactor.

It is found in the cytoplasm. The enzyme catalyses tRNA(Cys) + L-cysteine + ATP = L-cysteinyl-tRNA(Cys) + AMP + diphosphate. The chain is Cysteine--tRNA ligase from Magnetococcus marinus (strain ATCC BAA-1437 / JCM 17883 / MC-1).